We begin with the raw amino-acid sequence, 345 residues long: RNA polymerase II holoenzyme cyclin-like subunit (345 aa).

Residues 23 to 147 (ESRRKLLLLE…KLAEFEFYLI (125 aa)) enclose the Cyclin N-terminal domain.

The protein belongs to the cyclin family. Cyclin C subfamily. Component of the SRB8-11 complex, a regulatory module of the Mediator complex.

It localises to the nucleus. Its function is as follows. Component of the SRB8-11 complex. The SRB8-11 complex is a regulatory module of the Mediator complex which is itself involved in regulation of basal and activated RNA polymerase II-dependent transcription. The SRB8-11 complex may be involved in the transcriptional repression of a subset of genes regulated by Mediator. It may inhibit the association of the Mediator complex with RNA polymerase II to form the holoenzyme complex. The SRB8-11 complex phosphorylates the C-terminal domain (CTD) of the largest subunit of RNA polymerase II. The protein is RNA polymerase II holoenzyme cyclin-like subunit (SSN8) of Debaryomyces hansenii (strain ATCC 36239 / CBS 767 / BCRC 21394 / JCM 1990 / NBRC 0083 / IGC 2968) (Yeast).